The following is an 88-amino-acid chain: Defensin-like protein 24 (88 aa).

A signal peptide spans 1–23; sequence MASSKFVLFAILALSLLLSGTEA. 4 disulfides stabilise this stretch: Cys-37–Cys-87, Cys-47–Cys-72, Cys-56–Cys-83, and Cys-60–Cys-85.

This sequence belongs to the DEFL family.

It localises to the secreted. This chain is Defensin-like protein 24, found in Arabidopsis thaliana (Mouse-ear cress).